Reading from the N-terminus, the 346-residue chain is L-threonine dehydratase catabolic TdcB (346 aa).

59–60 (FT) contributes to the AMP binding site. N6-(pyridoxal phosphate)lysine is present on lysine 64. AMP-binding positions include glutamine 94, 125–126 (GY), and asparagine 321.

This sequence belongs to the serine/threonine dehydratase family. In the native structure, TdcB is in a dimeric form, whereas in the TdcB-AMP complex, it exists in a tetrameric form (dimer of dimers). Pyridoxal 5'-phosphate serves as cofactor.

The catalysed reaction is L-threonine = 2-oxobutanoate + NH4(+). It participates in amino-acid degradation; L-threonine degradation via propanoate pathway; propanoate from L-threonine: step 1/4. With respect to regulation, each protein molecule can bind up to four molecules of AMP, which act as an allosteric activator to the enzyme. Its function is as follows. Catalyzes the anaerobic formation of alpha-ketobutyrate and ammonia from threonine in a two-step reaction. The first step involved a dehydration of threonine and a production of enamine intermediates (aminocrotonate), which tautomerizes to its imine form (iminobutyrate). Both intermediates are unstable and short-lived. The second step is the nonenzymatic hydrolysis of the enamine/imine intermediates to form 2-ketobutyrate and free ammonia. In the low water environment of the cell, the second step is accelerated by RidA. The polypeptide is L-threonine dehydratase catabolic TdcB (tdcB) (Staphylococcus aureus (strain Mu50 / ATCC 700699)).